We begin with the raw amino-acid sequence, 436 residues long: Methylenetetrahydrofolate--tRNA-(uracil-5-)-methyltransferase TrmFO (436 aa).

Residue 10–15 coordinates FAD; sequence GAGLAG.

This sequence belongs to the MnmG family. TrmFO subfamily. FAD is required as a cofactor.

Its subcellular location is the cytoplasm. The catalysed reaction is uridine(54) in tRNA + (6R)-5,10-methylene-5,6,7,8-tetrahydrofolate + NADH + H(+) = 5-methyluridine(54) in tRNA + (6S)-5,6,7,8-tetrahydrofolate + NAD(+). The enzyme catalyses uridine(54) in tRNA + (6R)-5,10-methylene-5,6,7,8-tetrahydrofolate + NADPH + H(+) = 5-methyluridine(54) in tRNA + (6S)-5,6,7,8-tetrahydrofolate + NADP(+). Catalyzes the folate-dependent formation of 5-methyl-uridine at position 54 (M-5-U54) in all tRNAs. In Staphylococcus carnosus (strain TM300), this protein is Methylenetetrahydrofolate--tRNA-(uracil-5-)-methyltransferase TrmFO.